The primary structure comprises 121 residues: Chromosome transmission fidelity protein 8 homolog (121 aa).

The protein belongs to the CTF8 family. As to quaternary structure, component of the CTF18-RFC complex, which consists of CTF18, CTF8, DSCC1, RFC2, RFC3, RFC4 and RFC5. The CTF18-RFC complex does not interact with the Rad9/Rad1/Hus1 complex. The CTF18-RFC complex interacts with POLH. CTF18/CTF8/DSCC1 associate with PCNA. CTF8 exists as a dimer with DSCC1.

The protein resides in the nucleus. Functionally, chromosome cohesion factor involved in sister chromatid cohesion and fidelity of chromosome transmission. Component of one of the cell nuclear antigen loader complexes, CTF18-replication factor C (CTF18-RFC), which consists of CTF18, CTF8, DSCC1, RFC2, RFC3, RFC4 and RFC5. The CTF18-RFC complex binds to single-stranded and primed DNAs and has weak ATPase activity that is stimulated the presence of primed DNA, replication protein A (RPA) and proliferating cell nuclear antigen (PCNA). The CTF18-RFC complex catalyzes the ATP-dependent loading of PCNA onto primed and gapped DNA. It also interacts with and stimulates POLH, which is suggestive of a protein network that coordinates DNA repair, recombination and chromosome cohesion reactions with replication fork progression. The polypeptide is Chromosome transmission fidelity protein 8 homolog (Homo sapiens (Human)).